Reading from the N-terminus, the 628-residue chain is Netrin-4 (628 aa).

The N-terminal stretch at 1 to 18 (MGSCARLLLLWGCTVVAA) is a signal peptide. The 232-residue stretch at 30 to 261 (CEKACNPRMG…AIYDFIVKGS (232 aa)) folds into the Laminin N-terminal domain. 2 N-linked (GlcNAc...) asparagine glycosylation sites follow: Asn56 and Asn163. Cystine bridges form between Cys262/Cys271, Cys264/Cys293, Cys295/Cys304, Cys307/Cys329, Cys332/Cys341, Cys334/Cys359, Cys362/Cys371, Cys374/Cys392, Cys395/Cys413, Cys397/Cys420, Cys422/Cys431, and Cys434/Cys446. 3 Laminin EGF-like domains span residues 262–331 (CFCN…ECRT), 332–394 (CKCN…ACKP), and 395–448 (CSCH…GCRP). N-linked (GlcNAc...) asparagine glycosylation is present at Asn353. Asn483 carries an N-linked (GlcNAc...) asparagine glycan. 2 disulfides stabilise this stretch: Cys506–Cys576 and Cys520–Cys627. The 122-residue stretch at 506–627 (CECKEQTLGN…KVMDILKREC (122 aa)) folds into the NTR domain.

In terms of assembly, may form a homodimer. In terms of tissue distribution, expressed in kidney, spleen, mammary gland, aorta, heart, ovary, prostate and fetal spleen.

Its subcellular location is the secreted. It localises to the extracellular space. It is found in the extracellular matrix. The protein resides in the basement membrane. Functionally, may play an important role in neural, kidney and vascular development. Promotes neurite elongation from olfactory bulb explants. The sequence is that of Netrin-4 (NTN4) from Homo sapiens (Human).